The chain runs to 251 residues: Ubiquinone/menaquinone biosynthesis C-methyltransferase UbiE (251 aa).

S-adenosyl-L-methionine contacts are provided by residues T74, D95, and N123–A124.

It belongs to the class I-like SAM-binding methyltransferase superfamily. MenG/UbiE family.

It catalyses the reaction a 2-demethylmenaquinol + S-adenosyl-L-methionine = a menaquinol + S-adenosyl-L-homocysteine + H(+). The enzyme catalyses a 2-methoxy-6-(all-trans-polyprenyl)benzene-1,4-diol + S-adenosyl-L-methionine = a 5-methoxy-2-methyl-3-(all-trans-polyprenyl)benzene-1,4-diol + S-adenosyl-L-homocysteine + H(+). It participates in quinol/quinone metabolism; menaquinone biosynthesis; menaquinol from 1,4-dihydroxy-2-naphthoate: step 2/2. It functions in the pathway cofactor biosynthesis; ubiquinone biosynthesis. In terms of biological role, methyltransferase required for the conversion of demethylmenaquinol (DMKH2) to menaquinol (MKH2) and the conversion of 2-polyprenyl-6-methoxy-1,4-benzoquinol (DDMQH2) to 2-polyprenyl-3-methyl-6-methoxy-1,4-benzoquinol (DMQH2). The sequence is that of Ubiquinone/menaquinone biosynthesis C-methyltransferase UbiE from Shewanella baltica (strain OS223).